Here is a 348-residue protein sequence, read N- to C-terminus: Uroporphyrinogen decarboxylase (348 aa).

Substrate is bound by residues 28–32, aspartate 78, tyrosine 154, threonine 209, and histidine 325; that span reads RQAGR.

Belongs to the uroporphyrinogen decarboxylase family. In terms of assembly, homodimer.

It localises to the cytoplasm. It catalyses the reaction uroporphyrinogen III + 4 H(+) = coproporphyrinogen III + 4 CO2. The protein operates within porphyrin-containing compound metabolism; protoporphyrin-IX biosynthesis; coproporphyrinogen-III from 5-aminolevulinate: step 4/4. Its function is as follows. Catalyzes the decarboxylation of four acetate groups of uroporphyrinogen-III to yield coproporphyrinogen-III. This chain is Uroporphyrinogen decarboxylase, found in Rhodopseudomonas palustris (strain BisB5).